A 241-amino-acid chain; its full sequence is Phosphoribosylaminoimidazole-succinocarboxamide synthase (241 aa).

The protein belongs to the SAICAR synthetase family.

It catalyses the reaction 5-amino-1-(5-phospho-D-ribosyl)imidazole-4-carboxylate + L-aspartate + ATP = (2S)-2-[5-amino-1-(5-phospho-beta-D-ribosyl)imidazole-4-carboxamido]succinate + ADP + phosphate + 2 H(+). The protein operates within purine metabolism; IMP biosynthesis via de novo pathway; 5-amino-1-(5-phospho-D-ribosyl)imidazole-4-carboxamide from 5-amino-1-(5-phospho-D-ribosyl)imidazole-4-carboxylate: step 1/2. This Deinococcus geothermalis (strain DSM 11300 / CIP 105573 / AG-3a) protein is Phosphoribosylaminoimidazole-succinocarboxamide synthase.